Reading from the N-terminus, the 484-residue chain is Glycogen synthase (484 aa).

Lys18 lines the ADP-alpha-D-glucose pocket.

The protein belongs to the glycosyltransferase 1 family. Bacterial/plant glycogen synthase subfamily.

It carries out the reaction [(1-&gt;4)-alpha-D-glucosyl](n) + ADP-alpha-D-glucose = [(1-&gt;4)-alpha-D-glucosyl](n+1) + ADP + H(+). Its pathway is glycan biosynthesis; glycogen biosynthesis. In terms of biological role, synthesizes alpha-1,4-glucan chains using ADP-glucose. The protein is Glycogen synthase of Vibrio cholerae serotype O1 (strain ATCC 39541 / Classical Ogawa 395 / O395).